A 208-amino-acid polypeptide reads, in one-letter code: Small ribosomal subunit protein uS4 (208 aa).

The region spanning 98–163 (TRLDNVVFRL…TPLFKEIVDG (66 aa)) is the S4 RNA-binding domain.

The protein belongs to the universal ribosomal protein uS4 family. In terms of assembly, part of the 30S ribosomal subunit. Contacts protein S5. The interaction surface between S4 and S5 is involved in control of translational fidelity.

One of the primary rRNA binding proteins, it binds directly to 16S rRNA where it nucleates assembly of the body of the 30S subunit. Its function is as follows. With S5 and S12 plays an important role in translational accuracy. This is Small ribosomal subunit protein uS4 from Heliobacterium modesticaldum (strain ATCC 51547 / Ice1).